Here is a 602-residue protein sequence, read N- to C-terminus: Aspartate--tRNA(Asp/Asn) ligase (602 aa).

Residue Glu-170 participates in L-aspartate binding. Residues 194–197 are aspartate; that stretch reads QLFK. Residue Arg-216 coordinates L-aspartate. ATP-binding positions include 216–218 and Gln-225; that span reads RDE. His-448 is a binding site for L-aspartate. Glu-482 is a binding site for ATP. Arg-489 lines the L-aspartate pocket. Residue 534–537 coordinates ATP; sequence GWDR. Residues 559–602 are disordered; the sequence is GGVDPLTNAPAPITAQQRKESGVDAKPEPKGDAASAKPDAPADK. Basic and acidic residues predominate over residues 575–589; sequence QRKESGVDAKPEPKG. The span at 590 to 602 shows a compositional bias: low complexity; that stretch reads DAASAKPDAPADK.

It belongs to the class-II aminoacyl-tRNA synthetase family. Type 1 subfamily. Homodimer.

The protein localises to the cytoplasm. The catalysed reaction is tRNA(Asx) + L-aspartate + ATP = L-aspartyl-tRNA(Asx) + AMP + diphosphate. Aspartyl-tRNA synthetase with relaxed tRNA specificity since it is able to aspartylate not only its cognate tRNA(Asp) but also tRNA(Asn). Reaction proceeds in two steps: L-aspartate is first activated by ATP to form Asp-AMP and then transferred to the acceptor end of tRNA(Asp/Asn). The sequence is that of Aspartate--tRNA(Asp/Asn) ligase from Rhodococcus jostii (strain RHA1).